A 665-amino-acid chain; its full sequence is BTB/POZ domain-containing protein At1g30440 (665 aa).

Positions 28 to 98 (SDIVVEVGEM…CYGVKLELTA (71 aa)) constitute a BTB domain. Residues 214–508 (DWWYEDASML…VQVLFFEQLQ (295 aa)) enclose the NPH3 domain. The segment at 260–280 (LKRRRGGPESSGRFSTPLGSG) is disordered. Residues 271–280 (GRFSTPLGSG) show a composition bias toward polar residues. At serine 279 the chain carries Phosphoserine. A coiled-coil region spans residues 281 to 306 (NVLSEEEQKNLLEEIQELLRMQKGLV). Residue tyrosine 449 is modified to Phosphotyrosine. A compositionally biased stretch (polar residues) spans 626 to 639 (SAQEGSVSKSNNEN). Positions 626-665 (SAQEGSVSKSNNENVKIEKLKDVKERRGKHKKASSISSER) are disordered. Positions 640–650 (VKIEKLKDVKE) are enriched in basic and acidic residues.

This sequence belongs to the NPH3 family.

Its pathway is protein modification; protein ubiquitination. Its function is as follows. May act as a substrate-specific adapter of an E3 ubiquitin-protein ligase complex (CUL3-RBX1-BTB) which mediates the ubiquitination and subsequent proteasomal degradation of target proteins. The polypeptide is BTB/POZ domain-containing protein At1g30440 (Arabidopsis thaliana (Mouse-ear cress)).